Here is a 1770-residue protein sequence, read N- to C-terminus: NEDD4-binding protein 2 (1770 aa).

A disordered region spans residues methionine 1–methionine 40. The CUE domain maps to aspartate 46–alanine 89. Coiled-coil stretches lie at residues threonine 90 to serine 177 and histidine 218 to cysteine 259. The interval glutamate 95–lysine 129 is disordered. Residues serine 97–glutamine 108 show a composition bias toward polar residues. A compositionally biased stretch (basic and acidic residues) spans lysine 115 to lysine 129. Residue glycine 447–serine 454 participates in ATP binding. 4 disordered regions span residues serine 712–valine 756, lysine 795–proline 822, aspartate 836–proline 862, and serine 890–glycine 913. Residues serine 843–cysteine 856 are compositionally biased toward basic and acidic residues. The residue at position 906 (serine 906) is a Phosphoserine. At threonine 1210 the chain carries Phosphothreonine. Residues asparagine 1580–proline 1606 form a disordered region. A Smr domain is found at leucine 1691–lysine 1770.

In terms of assembly, binds NEDD4. Binds BCL3 and CREBBP. Post-translationally, ubiquitinated; this targets the protein for degradation by the proteasome.

Its subcellular location is the cytoplasm. In terms of biological role, has 5'-polynucleotide kinase and nicking endonuclease activity. May play a role in DNA repair or recombination. In Homo sapiens (Human), this protein is NEDD4-binding protein 2 (N4BP2).